The sequence spans 644 residues: Sodium/potassium/calcium exchanger 3 (644 aa).

The signal sequence occupies residues 1 to 44 (MRPSGDEDRARRRRRRRRRRDLLLSQLCFLASVALLLWSLSSLR). Residues 45-107 (EQKELDLMDL…DIFTNEDRRQ (63 aa)) lie on the Extracellular side of the membrane. N-linked (GlcNAc...) asparagine glycosylation is found at asparagine 71 and asparagine 86. A helical transmembrane segment spans residues 108–128 (GAVVLHVLCAIYMFYALAIVC). Over 129–153 (DDFFVPSLEKICERLHLSEDVAGAT) the chain is Cytoplasmic. Residues 149 to 189 (VAGATFMAAGSSAPELFTSVIGVFITKGDVGVGTIVGSAVF) form an Alpha-1 repeat. Residues 154-174 (FMAAGSSAPELFTSVIGVFIT) form a helical membrane-spanning segment. Residues 175–182 (KGDVGVGT) are Extracellular-facing. The chain crosses the membrane as a helical span at residues 183 to 203 (IVGSAVFNILCIIGVCGLFAG). The Cytoplasmic portion of the chain corresponds to 204–210 (QVVALSS). The helical transmembrane segment at 211 to 231 (WCLLRDSIYYTLSVIALIVFI) threads the bilayer. Residues 232–234 (YDE) are Extracellular-facing. A helical transmembrane segment spans residues 235-255 (KVSWWESLVLVLMYLIYIVIM). Residues 256–484 (KYNACIHQCF…WFMVTFASST (229 aa)) are Cytoplasmic-facing. A Phosphoserine modification is found at serine 308. The tract at residues 405 to 442 (AEAGNETENENEDNENDEEEEEDEDDDEGPYTPFDTPS) is disordered. Residues 409 to 433 (NETENENEDNENDEEEEEDEDDDEG) are compositionally biased toward acidic residues. Residues 485-505 (LWIAAFSYMMVWMVTIIGYTL) form a helical membrane-spanning segment. Residues 506–510 (GIPDV) are Extracellular-facing. A helical membrane pass occupies residues 511-531 (IMGITFLAAGTSVPDCMASLI). The stretch at 518 to 549 (AAGTSVPDCMASLIVARQGMGDMAVSNSIGSN) is one Alpha-2 repeat. The Cytoplasmic segment spans residues 532–549 (VARQGMGDMAVSNSIGSN). Residues 550–570 (VFDILIGLGLPWALQTLAVDY) form a helical membrane-spanning segment. The Extracellular portion of the chain corresponds to 571–580 (GSYIRLNSRG). The chain crosses the membrane as a helical span at residues 581-601 (LIYSVGLLLASVFVTVFGVHL). The Cytoplasmic segment spans residues 602–615 (NKWQLDKKLGCGCL). The helical transmembrane segment at 616 to 636 (LLYGVFLCFSIMTEFNVFTFV) threads the bilayer. The Extracellular segment spans residues 637–644 (NLPMCGDH).

The protein belongs to the Ca(2+):cation antiporter (CaCA) (TC 2.A.19) family. SLC24A subfamily. Abundant in the brain. Expressed at low levels in the aorta, uterus and intestine.

The protein localises to the cell membrane. The catalysed reaction is Ca(2+)(out) + K(+)(out) + 4 Na(+)(in) = Ca(2+)(in) + K(+)(in) + 4 Na(+)(out). Calcium, potassium:sodium antiporter that transports 1 Ca(2+) and 1 K(+) in exchange for 4 Na(+). The chain is Sodium/potassium/calcium exchanger 3 (SLC24A3) from Homo sapiens (Human).